The primary structure comprises 48 residues: U-actitoxin-Cgg3 (48 aa).

Disulfide bonds link Cys-5-Cys-41, Cys-7-Cys-33, and Cys-23-Cys-42. Ser-46 bears the Serine amide mark. Positions 47-48 (GR) are cleaved as a propeptide — removed in mature form.

Belongs to the sea anemone type 3 (BDS) potassium channel toxin family.

The protein localises to the secreted. Neurotoxin that induces paralysis when injected into crabs. May function in antimicrobial activity as it displays inhibitory activity towards the B.licheniformis enzyme subtilisin A (SUBTA) and the recombinant S.maltophilia protease 1 (rStmPr1) enzyme. Also displays inhibitory activity against various proteases including the porcine pancreatic elastase (PPE) and proteinase K (PK). This Condylactis gigantea (Giant Caribbean anemone) protein is U-actitoxin-Cgg3.